Reading from the N-terminus, the 454-residue chain is Uridine kinase (454 aa).

28–35 (GPSGSGKT) contacts ATP.

It belongs to the uridine kinase family.

The protein resides in the cytoplasm. The protein localises to the nucleus. It carries out the reaction uridine + ATP = UMP + ADP + H(+). The catalysed reaction is cytidine + ATP = CMP + ADP + H(+). The protein operates within pyrimidine metabolism; CTP biosynthesis via salvage pathway; CTP from cytidine: step 1/3. Its pathway is pyrimidine metabolism; UMP biosynthesis via salvage pathway; UMP from uridine: step 1/1. Its function is as follows. Catalyzes the conversion of uridine into UMP and cytidine into CMP in the pyrimidine salvage pathway. In Schizosaccharomyces pombe (strain 972 / ATCC 24843) (Fission yeast), this protein is Uridine kinase (urk1).